The chain runs to 309 residues: MVGFKATDVPPTATVKFLGAGTAACIADLITFPLDTAKVRLQIQGESQGLARTAASAQYRGVLGTILTMVRTEGPRSLYNGLVAGLQRQMSFASVRIGLYDSVKQFYTKGSEHAGIGSRLLAGSTTGALAVAVAQPTDVVKVRFQAQARAGGGRRYQSTVEAYKTIAREEGIRGLWKGTSPNVARNAIVNCTELVTYDLIKDTLLKANLMTDDLPCHFTSAFGAGFCTTVIASPVDVVKTRYMNSALGQYHSAGHCALTMLRKEGPRAFYKGFMPSFLRLGSWNVVMFVTYEQLKRALMAAYESREAPF.

Topologically, residues 1–16 (MVGFKATDVPPTATVK) are mitochondrial intermembrane. 3 Solcar repeats span residues 11–106 (PTAT…VKQF), 114–203 (AGIG…IKDT), and 212–297 (DDLP…LKRA). An important for interaction with long-chain fatty acids region spans residues 16–63 (KFLGAGTAACIADLITFPLDTAKVRLQIQGESQGLARTAASAQYRGVL). A helical transmembrane segment spans residues 17 to 40 (FLGAGTAACIADLITFPLDTAKVR). Residues 41–77 (LQIQGESQGLARTAASAQYRGVLGTILTMVRTEGPRS) are Mitochondrial matrix-facing. Residues 78-103 (LYNGLVAGLQRQMSFASVRIGLYDSV) traverse the membrane as a helical segment. The Mitochondrial intermembrane segment spans residues 104–119 (KQFYTKGSEHAGIGSR). A helical membrane pass occupies residues 120–145 (LLAGSTTGALAVAVAQPTDVVKVRFQ). Topologically, residues 146 to 173 (AQARAGGGRRYQSTVEAYKTIAREEGIR) are mitochondrial matrix. A helical transmembrane segment spans residues 174–199 (GLWKGTSPNVARNAIVNCTELVTYDL). Residues 200–217 (IKDTLLKANLMTDDLPCH) are Mitochondrial intermembrane-facing. A helical membrane pass occupies residues 218-242 (FTSAFGAGFCTTVIASPVDVVKTRY). Topologically, residues 243–268 (MNSALGQYHSAGHCALTMLRKEGPRA) are mitochondrial matrix. The chain crosses the membrane as a helical span at residues 269 to 294 (FYKGFMPSFLRLGSWNVVMFVTYEQL). Positions 278–285 (LRLGSWNV) are important for interaction with long-chain fatty acids. Over 295 to 309 (KRALMAAYESREAPF) the chain is Mitochondrial intermembrane.

Belongs to the mitochondrial carrier (TC 2.A.29) family. Homotetramer. Adopts an asymmetrical dimer of dimers functional form. Interacts with MICU1 (when methylated); leading to decrease the calcium sensitivity of MICU1. As to expression, expressed in a variety of organs, with predominant expression in the heart, lung and spleen.

Its subcellular location is the mitochondrion inner membrane. The enzyme catalyses L-aspartate(out) + phosphate(in) + H(+)(in) = L-aspartate(in) + phosphate(out) + H(+)(out). It carries out the reaction oxaloacetate(out) + phosphate(in) + H(+)(in) = oxaloacetate(in) + phosphate(out) + H(+)(out). It catalyses the reaction (S)-malate(out) + phosphate(in) + H(+)(in) = (S)-malate(in) + phosphate(out) + H(+)(out). The catalysed reaction is malonate(out) + phosphate(in) + H(+)(in) = malonate(in) + phosphate(out) + H(+)(out). The enzyme catalyses sulfate(out) + phosphate(in) + H(+)(in) = sulfate(in) + phosphate(out) + H(+)(out). It carries out the reaction (S)-malate(out) = (S)-malate(in). It catalyses the reaction L-aspartate(out) = L-aspartate(in). The catalysed reaction is phosphate(in) = phosphate(out). The enzyme catalyses chloride(in) = chloride(out). It carries out the reaction H(+)(in) = H(+)(out). It catalyses the reaction a long-chain fatty acid(out) = a long-chain fatty acid(in). Its function is as follows. Antiporter that exports dicarboxylate intermediates of the Krebs cycle in exchange for phosphate plus a proton across the inner membrane of mitochondria, a process driven by mitochondrial motive force with an overall impact on glycolysis, glutaminolysis and glutathione-dependent redox balance. Continuous export of oxaloacetate and related four-carbon dicarboxylates from mitochondrial matrix into the cytosol negatively regulates the oxidation of acetyl-CoA substrates via the Krebs cycle lowering the ATP/ADP ratio and reactive oxygen species (ROS) production. May mediate inducible proton entry into the mitochondrial matrix affecting ATP turnover as a protection mechanism against oxidative stress. The proton currents are most likely associated with fatty acid flipping across the inner membrane of mitochondria in a metabolic process regulated by free fatty acids and purine nucleotides. Regulates the use of glucose as a source of energy. Required for glucose-induced DRP1-dependent mitochondrial fission and neuron activation in the ventromedial nucleus of the hypothalamus (VMH). This mitochondrial adaptation mechanism modulates the VMH pool of glucose-excited neurons with an impact on systemic glucose homeostasis. Regulates ROS levels and metabolic reprogramming of macrophages during the resolution phase of inflammation. Attenuates ROS production in response to IL33 to preserve the integrity of the Krebs cycle required for persistent production of itaconate and subsequent GATA3-dependent differentiation of inflammation-resolving alternatively activated macrophages. Can unidirectionally transport anions including L-malate, L-aspartate, phosphate and chloride ions. Does not mediate adaptive thermogenesis. In Rattus norvegicus (Rat), this protein is Dicarboxylate carrier UCP2 (Ucp2).